We begin with the raw amino-acid sequence, 353 residues long: Serine/threonine-protein kinase SRK2G (353 aa).

The Protein kinase domain maps to 4 to 260 (YDVVKDLGAG…LKEIKNHPWY (257 aa)). Residues 10–18 (LGAGNFGVA) and Lys-33 contribute to the ATP site. Residue Asp-123 is the Proton acceptor of the active site. Positions 299–353 (RNPAPSTSAVKSSGSGADEEEEEDVEAEVEEEEDDEDEYEKHVKEAQSCQESDKA) are disordered. Positions 302–313 (APSTSAVKSSGS) are enriched in polar residues. Residues 315–336 (ADEEEEEDVEAEVEEEEDDEDE) are compositionally biased toward acidic residues. Basic and acidic residues predominate over residues 337 to 353 (YEKHVKEAQSCQESDKA).

This sequence belongs to the protein kinase superfamily. Ser/Thr protein kinase family. In terms of tissue distribution, expressed in seedlings.

It localises to the nucleus. The enzyme catalyses L-seryl-[protein] + ATP = O-phospho-L-seryl-[protein] + ADP + H(+). It carries out the reaction L-threonyl-[protein] + ATP = O-phospho-L-threonyl-[protein] + ADP + H(+). In Arabidopsis thaliana (Mouse-ear cress), this protein is Serine/threonine-protein kinase SRK2G (SRK2G).